The chain runs to 476 residues: Aspartyl/glutamyl-tRNA(Asn/Gln) amidotransferase subunit B (476 aa).

It belongs to the GatB/GatE family. GatB subfamily. In terms of assembly, heterotrimer of A, B and C subunits.

The catalysed reaction is L-glutamyl-tRNA(Gln) + L-glutamine + ATP + H2O = L-glutaminyl-tRNA(Gln) + L-glutamate + ADP + phosphate + H(+). The enzyme catalyses L-aspartyl-tRNA(Asn) + L-glutamine + ATP + H2O = L-asparaginyl-tRNA(Asn) + L-glutamate + ADP + phosphate + 2 H(+). Its function is as follows. Allows the formation of correctly charged Asn-tRNA(Asn) or Gln-tRNA(Gln) through the transamidation of misacylated Asp-tRNA(Asn) or Glu-tRNA(Gln) in organisms which lack either or both of asparaginyl-tRNA or glutaminyl-tRNA synthetases. The reaction takes place in the presence of glutamine and ATP through an activated phospho-Asp-tRNA(Asn) or phospho-Glu-tRNA(Gln). This chain is Aspartyl/glutamyl-tRNA(Asn/Gln) amidotransferase subunit B, found in Nitratidesulfovibrio vulgaris (strain ATCC 29579 / DSM 644 / CCUG 34227 / NCIMB 8303 / VKM B-1760 / Hildenborough) (Desulfovibrio vulgaris).